The chain runs to 394 residues: 1-deoxy-D-xylulose 5-phosphate reductoisomerase (394 aa).

Threonine 11, glycine 12, serine 13, isoleucine 14, glycine 37, asparagine 39, and asparagine 126 together coordinate NADPH. Lysine 127 provides a ligand contact to 1-deoxy-D-xylulose 5-phosphate. An NADPH-binding site is contributed by glutamate 128. Position 152 (aspartate 152) interacts with Mn(2+). 1-deoxy-D-xylulose 5-phosphate is bound by residues serine 153, glutamate 154, serine 178, and histidine 201. Glutamate 154 contacts Mn(2+). Glycine 207 contacts NADPH. 1-deoxy-D-xylulose 5-phosphate contacts are provided by serine 214, asparagine 219, lysine 220, and glutamate 223. Glutamate 223 lines the Mn(2+) pocket.

The protein belongs to the DXR family. Requires Mg(2+) as cofactor. Mn(2+) is required as a cofactor.

The enzyme catalyses 2-C-methyl-D-erythritol 4-phosphate + NADP(+) = 1-deoxy-D-xylulose 5-phosphate + NADPH + H(+). It functions in the pathway isoprenoid biosynthesis; isopentenyl diphosphate biosynthesis via DXP pathway; isopentenyl diphosphate from 1-deoxy-D-xylulose 5-phosphate: step 1/6. Catalyzes the NADPH-dependent rearrangement and reduction of 1-deoxy-D-xylulose-5-phosphate (DXP) to 2-C-methyl-D-erythritol 4-phosphate (MEP). This Synechocystis sp. (strain ATCC 27184 / PCC 6803 / Kazusa) protein is 1-deoxy-D-xylulose 5-phosphate reductoisomerase.